A 519-amino-acid polypeptide reads, in one-letter code: Cell adhesion molecule CEACAM1 (519 aa).

Residues 1–34 form the signal peptide; that stretch reads MELASARLLRGQIPWRGLLLTASLLTYWSPLTTA. At glutamine 35 the chain carries Pyrrolidone carboxylic acid. Over 35 to 425 the chain is Extracellular; sequence QVTVDAVPPN…QGNSGLSEGA (391 aa). The tract at residues 39–142 is required for homophilic binding; the sequence is DAVPPNVVEE…QTSVQFRVYP (104 aa). An Ig-like V-type domain is found at 42–140; the sequence is PPNVVEEKSV…PIQTSVQFRV (99 aa). 14 N-linked (GlcNAc...) asparagine glycosylation sites follow: asparagine 87, asparagine 104, asparagine 113, asparagine 148, asparagine 152, asparagine 173, asparagine 197, asparagine 224, asparagine 256, asparagine 288, asparagine 292, asparagine 302, asparagine 315, and asparagine 331. Ig-like C2-type domains are found at residues 147–232, 237–317, and 325–403; these read PNVT…FNLD, PDAP…KNIT, and PSIQ…FRIS. Cysteine 167 and cysteine 215 form a disulfide bridge. Cysteine 259 and cysteine 299 form a disulfide bridge. An intrachain disulfide couples cysteine 344 to cysteine 392. The N-linked (GlcNAc...) asparagine; atypical glycan is linked to asparagine 374. A helical membrane pass occupies residues 426–446; that stretch reads IAGIVIGSVAGVALIAALAYF. Residues 445 to 457 form an interaction with calmodulin region; the sequence is YFLYSRKTGGGSD. Residues 447-519 lie on the Cytoplasmic side of the membrane; the sequence is LYSRKTGGGS…ETVYSVVKKK (73 aa). The tract at residues 447–519 is interaction with FLNA; the sequence is LYSRKTGGGS…ETVYSVVKKK (73 aa). A disordered region spans residues 455–519; sequence GSDHRDLTEH…ETVYSVVKKK (65 aa). Basic and acidic residues predominate over residues 456–466; that stretch reads SDHRDLTEHKP. The tract at residues 484–519 is required for interaction with PTPN11 and PTPN6 and for control of phosphorylation level; that stretch reads DDVSYSVLNFNAQQSKRPTSASSSPTETVYSVVKKK. At tyrosine 488 the chain carries Phosphotyrosine; by SRC, LCK, INSR and EGFR. Residues 489–512 are compositionally biased toward polar residues; it reads SVLNFNAQQSKRPTSASSSPTETV. Serine 503 is subject to Phosphoserine. Residue tyrosine 513 is modified to Phosphotyrosine; by INSR, SRC and LCK. Residues 513–516 are essential for interaction with PTPN11 and PTPN6; it reads YSVV.

It belongs to the immunoglobulin superfamily. CEA family. In terms of assembly, monomer. Oligomer. Heterodimer. Homodimer. Cis-dimer/oligomer (via Ig-like C2-type and/or via cytoplasmic domains); induced by trans-homophilic cell adhesion through an allosteric mechanism transmitted by the Ig-like V-type domain, and is regulated by intracellular calcium and calmodulin. Interacts (via cytoplasmic domain) with calmodulin in a calcium dependent manner; reduces homophilic cell adhesion through dissociation of dimer. Isoform 1 interacts (via cytoplasmic domain) with PTPN11 (preferentially) and PTPN6; cis-homodimer form is preferred; this interaction is decreased by formation of isoform 1 / isoform 2 cis-heterodimers and is dependent on the monomer/dimer equilibrium; this interaction is phosphorylation-dependent. Isoform 1 interacts with LYN. Isoform 1 interacts (via cytoplasmic domain) with SRC (via SH2 domain); this interaction is regulated by trans-homophilic cell adhesion. Isoform 1 interacts (via cytoplasmic domain) with LCK; mediates phosphorylation at Tyr-488 and Tyr-513 resulting in PTPN6 association. Isoform 1 interacts with PTPN6; this interaction is phosphorylation-dependent and causes a profound decrease in TCR stimulation-induced CD247 and ZAP70 phosphorylation. Isoform 1 interacts with TCR/CD3 complex through TCR beta chain and CD3E; colocalizes at the cell surface and upon stimulation of the TCR/CD3 complex recruits PTPN6 in the TCR/CD3 complex, resulting in dephosphorylation of CD247 and ZAP70. Isoform 1 interacts (via cytoplasmic domain) with SHC1 (via SH2 domain); SHC1 mediates interaction with INSR or EGFR in a Ser-503 phosphorylation-dependent manner. Isoform 1 interacts with EGFR; the interaction is indirect. Isoform 1 interacts with CSF3R; down-regulates the CSF3R-STAT3 pathway through recruitment of PTPN6 that dephosphorylates CSF3R. Isoform 1 (phosphorylated form) interacts with TLR4 and SYK; recruits PTPN6 that dephosphorylates SYK, reducing the production of reactive oxygen species (ROS) and lysosome disruption, leading to a reduction of the inflammasome activity. Isoform 1 interacts with FLNA; inhibits cell migration and cell scattering by interfering with the interaction of FLNA with RALA. Isoform 1 interacts (via cytoplasmic domain) with PXN; the interaction is phosphotyrosyl-dependent. Isoform 1 interacts with KLRK1; recruits PTPN6 that dephosphorylates VAV1. Isoform 1 interacts with CEACAM8. Isoform 1 interacts with FASN; this interaction is insulin and phosphorylation-dependent; reduces fatty-acid synthase activity. Interacts (via Ig-like V-type) with HAVCR2 (via Ig-like V-type); facilitates the maturation and cell surface expression of HAVCR2 thereby regulating T-cell tolerance induction. Isoform 2 interacts (via the cytoplasmic domain) with ANXA2; this interaction is regulated by phosphorylation and appears in the AIIt complex. Interacts (via Lewis X moieties) with CD209 (via C-type lectin domain); this interaction is regulated by the glycosylation pattern of CEACAM1 on cell types and regulates contact between dendritic cells and neutrophils. Post-translationally, phosphorylated on serine and tyrosine. Isoform 1 is phosphorylated on tyrosine by Src family kinases like SRC and LCK and by receptor like CSF3R, EGFR and INSR upon stimulation. Phosphorylated at Ser-503; mediates activity. Phosphorylated at Tyr-488; regulates activity. Phosphorylated at Tyr-488 by EGFR and INSR upon stimulation; this phosphorylation is Ser-503-phosphorylation-dependent; mediates cellular internalization; increases interaction with FASN. Phosphorylated at Tyr-488 and Tyr-513 by LCK; mediates PTPN6 association and is regulated by homophilic ligation of CEACAM1 in the absence of T-cell activation. Phosphorylated at Tyr-513; mediates interaction with PTPN11. Phosphorylated on serine and threonine. Expressed in epithelia, vessel endothelia, leukocytes and platelets. Isoform 1 and isoform 2 are highly expressed in liver and intestine, moderately in lung, and weakly in muscle, kidney, and spleen. Expressed in granulocytes, lymphocytes, granulocytes, B cells, and T-cells.

The protein resides in the cell membrane. It is found in the lateral cell membrane. It localises to the apical cell membrane. The protein localises to the basal cell membrane. Its subcellular location is the cell junction. The protein resides in the adherens junction. It is found in the cytoplasmic vesicle. It localises to the secretory vesicle. The protein localises to the cell projection. Its subcellular location is the microvillus membrane. Cell adhesion protein that mediates homophilic cell adhesion in a calcium-independent manner. Plays a role as coinhibitory receptor in immune response, insulin action and also functions as an activator during angiogenesis. Its coinhibitory receptor function is phosphorylation- and PTPN6 -dependent, which in turn, suppress signal transduction of associated receptors by dephosphorylation of their downstream effectors. Plays a role in immune response, of T-cells, natural killer (NK) and neutrophils. Upon TCR/CD3 complex stimulation, inhibits TCR-mediated cytotoxicity by blocking granule exocytosis by mediating homophilic binding to adjacent cells, allowing interaction with and phosphorylation by LCK and interaction with the TCR/CD3 complex which recruits PTPN6 resulting in dephosphorylation of CD247 and ZAP70. Also inhibits T-cell proliferation and cytokine production through inhibition of JNK cascade and plays a crucial role in regulating autoimmunity and anti-tumor immunity by inhibiting T-cell through its interaction with HAVCR2. Upon natural killer (NK) cells activation, inhibit KLRK1-mediated cytolysis of CEACAM1-bearing tumor cells by trans-homophilic interactions with CEACAM1 on the target cell and lead to cis-interaction between CEACAM1 and KLRK1, allowing PTPN6 recruitment and then VAV1 dephosphorylation. Upon neutrophils activation negatively regulates IL1B production by recruiting PTPN6 to a SYK-TLR4-CEACAM1 complex, that dephosphorylates SYK, reducing the production of reactive oxygen species (ROS) and lysosome disruption, which in turn, reduces the activity of the inflammasome. Down-regulates neutrophil production by acting as a coinhibitory receptor for CSF3R by downregulating the CSF3R-STAT3 pathway through recruitment of PTPN6 that dephosphorylates CSF3R. Also regulates insulin action by promoting INS clearance and regulating lipogenesis in liver through regulating insulin signaling. Upon INS stimulation, undergoes phosphorylation by INSR leading to INS clearance by increasing receptor-mediated insulin endocytosis. This inernalization promotes interaction with FASN leading to receptor-mediated insulin degradation and to reduction of FASN activity leading to negative regulation of fatty acid synthesis. INSR-mediated phosphorylation also provokes a down-regulation of cell proliferation through SHC1 interaction resulting in decrease coupling of SHC1 to the MAPK3/ERK1-MAPK1/ERK2 and phosphatidylinositol 3-kinase pathways. Functions as activator in angiogenesis by promoting blood vessel remodeling through endothelial cell differentiation and migration and in arteriogenesis by increasing the number of collateral arteries and collateral vessel calibers after ischemia. Also regulates vascular permeability through the VEGFR2 signaling pathway resulting in control of nitric oxide production. Down-regulates cell growth in response to EGF through its interaction with SHC1 that mediates interaction with EGFR resulting in decrease coupling of SHC1 to the MAPK3/ERK1-MAPK1/ERK2 pathway. Negatively regulates platelet aggregation by decreasing platelet adhesion on type I collagen through the GPVI-FcRgamma complex. Inhibits cell migration and cell scattering through interaction with FLNA; interferes with the interaction of FLNA with RALA. Mediates bile acid transport activity in a phosphorylation dependent manner. Negatively regulates osteoclastogenesis. In terms of biological role, cell adhesion proteins that mediates homophilic cell adhesion in a calcium-independent manner. Promotes populations of T-cells regulating IgA production and secretion associated with control of the commensal microbiota and resistance to enteropathogens. This chain is Cell adhesion molecule CEACAM1, found in Rattus norvegicus (Rat).